A 75-amino-acid chain; its full sequence is Cytochrome c oxidase assembly factor 5 (75 aa).

Residues 28-66 form the CHCH domain; the sequence is QSDCVLQEGKSPKECLKEGYCKALQVTFFECKRSILDNR. The short motif at 31-42 is the Cx10C motif element; that stretch reads CVLQEGKSPKEC. Disulfide bonds link Cys-31–Cys-58 and Cys-42–Cys-48. The Cx9C motif signature appears at 48 to 58; it reads CKALQVTFFEC.

Belongs to the PET191 family.

Its function is as follows. Involved in an early step of the mitochondrial complex IV assembly process. This chain is Cytochrome c oxidase assembly factor 5 (coa5), found in Xenopus laevis (African clawed frog).